A 556-amino-acid polypeptide reads, in one-letter code: Undecaprenyl phosphate-alpha-4-amino-4-deoxy-L-arabinose arabinosyl transferase (556 aa).

The next 11 helical transmembrane spans lie at 5 to 25 (MIKL…LLPL), 88 to 108 (FASV…ALLL), 116 to 136 (LLAA…TYSV), 179 to 199 (FMTK…PVAL), 207 to 227 (LLLF…PWAL), 258 to 278 (APFW…LALL), 296 to 316 (FLLL…KGKL), 319 to 339 (YILP…SGLA), 355 to 375 (LAFG…IIMP), 384 to 404 (LTIV…AVSL), and 410 to 430 (WGYL…GSIP).

The protein belongs to the glycosyltransferase 83 family.

Its subcellular location is the cell inner membrane. It carries out the reaction 4-amino-4-deoxy-alpha-L-arabinopyranosyl di-trans,octa-cis-undecaprenyl phosphate + lipid IVA = lipid IIA + di-trans,octa-cis-undecaprenyl phosphate.. It functions in the pathway lipopolysaccharide metabolism; 4-amino-4-deoxy-beta-L-arabinose-lipid A biosynthesis. Its function is as follows. Catalyzes the transfer of the L-Ara4N moiety of the glycolipid undecaprenyl phosphate-alpha-L-Ara4N to lipid A. The modified arabinose is attached to lipid A and is required for resistance to polymyxin and cationic antimicrobial peptides. The sequence is that of Undecaprenyl phosphate-alpha-4-amino-4-deoxy-L-arabinose arabinosyl transferase from Pectobacterium carotovorum subsp. carotovorum (strain PC1).